We begin with the raw amino-acid sequence, 215 residues long: Ribonuclease T (215 aa).

The region spanning 20–194 (VVIDVETAGF…YDTERTAVLF (175 aa)) is the Exonuclease domain. Mg(2+) contacts are provided by Asp-23, Glu-25, His-181, and Asp-186. His-181 acts as the Proton donor/acceptor in catalysis.

This sequence belongs to the RNase T family. In terms of assembly, homodimer. The cofactor is Mg(2+).

Its function is as follows. Trims short 3' overhangs of a variety of RNA species, leaving a one or two nucleotide 3' overhang. Responsible for the end-turnover of tRNA: specifically removes the terminal AMP residue from uncharged tRNA (tRNA-C-C-A). Also appears to be involved in tRNA biosynthesis. This is Ribonuclease T from Shigella boydii serotype 4 (strain Sb227).